Consider the following 177-residue polypeptide: Parathyroid hormone-related protein (177 aa).

An N-terminal signal peptide occupies residues 1 to 24; sequence MLRRLVQQWSVLVFLLSYSVPSRG. A propeptide spanning residues 25–34 is cleaved from the precursor; the sequence is RSVEGLGRRL. The tract at residues 57-68 is important for receptor binding; sequence RFFLHHLIAEIH. The tract at residues 74–177 is disordered; the sequence is ATSEVSPNSK…TSLEPSSRTH (104 aa). A compositionally biased stretch (polar residues) spans 76–90; the sequence is SEVSPNSKPAPNTKN. A Nuclear localization signal motif is present at residues 108–129; sequence TNKVETYKEQPLKTPGKKKKGK. Positions 109–118 are enriched in basic and acidic residues; the sequence is NKVETYKEQP. Residues 122–132 are compositionally biased toward basic residues; that stretch reads PGKKKKGKPGK. Residues 161 to 177 show a composition bias toward low complexity; sequence PHTSPTSTSLEPSSRTH.

Belongs to the parathyroid hormone family. In terms of assembly, PTHrP interacts with PTH1R (via N-terminal extracellular domain). Post-translationally, there are several secretory forms, including osteostatin, arising from endoproteolytic cleavage of the initial translation product. Each of these secretory forms is believed to have one or more of its own receptors that mediates the normal paracrine, autocrine and endocrine actions.

It is found in the secreted. The protein resides in the cytoplasm. It localises to the nucleus. In terms of biological role, neuroendocrine peptide which is a critical regulator of cellular and organ growth, development, migration, differentiation and survival and of epithelial calcium ion transport. Acts by binding to its receptor, PTH1R, activating G protein-coupled receptor signaling. Regulates endochondral bone development and epithelial-mesenchymal interactions during the formation of the mammary glands and teeth. Required for skeletal homeostasis. Promotes mammary mesenchyme differentiation and bud outgrowth by modulating mesenchymal cell responsiveness to BMPs. Up-regulates BMPR1A expression in the mammary mesenchyme and this increases the sensitivity of these cells to BMPs and allows them to respond to BMP4 in a paracrine and/or autocrine fashion. BMP4 signaling in the mesenchyme, in turn, triggers epithelial outgrowth and augments MSX2 expression, which causes the mammary mesenchyme to inhibit hair follicle formation within the nipple sheath. Potent inhibitor of osteoclastic bone resorption. This chain is Parathyroid hormone-related protein (Pthlh), found in Rattus norvegicus (Rat).